The chain runs to 126 residues: C-type natriuretic peptide 2 (126 aa).

The signal sequence occupies residues 1–22 (MAVCSSSSLILLTVFLSVAVET). Positions 23–102 (RPSSDRDEEQ…REKTRRWGRK (80 aa)) are excised as a propeptide. A disordered region spans residues 44–80 (SLILAPPTSNDSTEGSSGSPEPPTPSEAPVLIHGDRG). Cysteines 110 and 126 form a disulfide.

This sequence belongs to the natriuretic peptide family. Brain and spinal cord.

Its subcellular location is the secreted. Exhibits natriuretic and vasodepressant activity. Has cGMP-stimulating activity. May help to regulate body fluid homeostasis in a variety of aquatic environments. In Oryzias latipes (Japanese rice fish), this protein is C-type natriuretic peptide 2.